Here is a 104-residue protein sequence, read N- to C-terminus: MKRKGFIMTVYPDKHDEYEKRHNEIWPEMVAELKKHGAHNYSIFLDKQTNQLFGYIEIEDEEKWSKMAETSINQKWWKFMKPVMKTNSDDSPVSTDLTEVFHMD.

Tyr-18 is a substrate binding site. Catalysis depends on His-22, which acts as the Proton donor. Residues Tyr-41 and 76 to 77 (WW) contribute to the substrate site.

It belongs to the rhamnose mutarotase family. As to quaternary structure, homodimer.

The protein resides in the cytoplasm. It carries out the reaction alpha-L-rhamnose = beta-L-rhamnose. Its pathway is carbohydrate metabolism; L-rhamnose metabolism. Functionally, involved in the anomeric conversion of L-rhamnose. The polypeptide is L-rhamnose mutarotase (Oceanobacillus iheyensis (strain DSM 14371 / CIP 107618 / JCM 11309 / KCTC 3954 / HTE831)).